Reading from the N-terminus, the 269-residue chain is Diaminopimelate epimerase (269 aa).

3 residues coordinate substrate: Asn13, Gln47, and Asn65. Cys74 (proton donor) is an active-site residue. Substrate contacts are provided by residues 75–76, Asn149, Asn182, and 200–201; these read GN and ER. The active-site Proton acceptor is Cys209. 210-211 lines the substrate pocket; sequence GT.

This sequence belongs to the diaminopimelate epimerase family. In terms of assembly, homodimer.

The protein localises to the cytoplasm. The enzyme catalyses (2S,6S)-2,6-diaminopimelate = meso-2,6-diaminopimelate. It participates in amino-acid biosynthesis; L-lysine biosynthesis via DAP pathway; DL-2,6-diaminopimelate from LL-2,6-diaminopimelate: step 1/1. In terms of biological role, catalyzes the stereoinversion of LL-2,6-diaminopimelate (L,L-DAP) to meso-diaminopimelate (meso-DAP), a precursor of L-lysine and an essential component of the bacterial peptidoglycan. The chain is Diaminopimelate epimerase from Erythrobacter litoralis (strain HTCC2594).